We begin with the raw amino-acid sequence, 631 residues long: RING finger protein 112 (631 aa).

The segment at 57 to 98 adopts an RING-type zinc-finger fold; the sequence is CSICLERLRDPISLDCGHDFCIRCFSTHRLPGCEPPCCPECR. Residues 131–631 are interaction with ZBTB16; it reads PVRAEPLLLV…GDREPLLQEE (501 aa). Residues 166–397 enclose the GB1/RHD3-type G domain; the sequence is DTPVCLLAVL…YVSDVLSAAP (232 aa). Residue 318–319 participates in GTP binding; the sequence is RD. 2 helical membrane passes run 547 to 567 and 580 to 600; these read LAAVGGAVGAGLMGLAGGVVG and GMVAAGAAVGATGAAVVGGGV.

This sequence belongs to the TRAFAC class dynamin-like GTPase superfamily. GB1/RHD3 GTPase family. GB1 subfamily. Self-associates. Interacts with SP1 in an oxidative stress-regulated manner. Interacts with SIGMAR1 in an oxidative stress-regulated manner. Interacts with ZBTB16 (via C2H2-type zinc finger domains 1 and 2). Post-translationally, auto-ubiquitinated. In terms of tissue distribution, predominantly expressed in brain. Decreased expression in glioma brain tumors as compared to normal brains (at protein level).

The protein resides in the membrane. Its subcellular location is the cytoplasm. The protein localises to the nucleus. It is found in the nuclear body. It localises to the nucleoplasm. The protein resides in the endosome. Its subcellular location is the cytoplasmic vesicle. The protein localises to the secretory vesicle. It is found in the synaptic vesicle. It localises to the postsynaptic density. The protein resides in the perikaryon. Its subcellular location is the cell projection. The protein localises to the neuron projection. It catalyses the reaction S-ubiquitinyl-[E2 ubiquitin-conjugating enzyme]-L-cysteine + [acceptor protein]-L-lysine = [E2 ubiquitin-conjugating enzyme]-L-cysteine + N(6)-ubiquitinyl-[acceptor protein]-L-lysine.. It participates in protein modification; protein ubiquitination. Its function is as follows. E3 ubiquitin-protein ligase that plays an important role in neuronal differentiation, including neurogenesis and gliogenesis, during brain development. During embryonic development initiates neuronal differentiation by inducing cell cycle arrest at the G0/G1 phase through up-regulation of cell-cycle regulatory proteins. Plays a role not only in the fetal period during the development of the nervous system, but also in the adult brain, where it is involved in the maintenance of neural functions and protection of the nervous tissue cells from oxidative stress-induced damage. Exhibits GTPase and E3 ubiquitin-protein ligase activities. Regulates dendritic spine density and synaptic neurotransmission; its ability to hydrolyze GTP is involved in the maintenance of dendritic spine density. In Homo sapiens (Human), this protein is RING finger protein 112 (RNF112).